A 442-amino-acid polypeptide reads, in one-letter code: tRNA modification GTPase MnmE (442 aa).

Positions 27, 84, and 124 each coordinate (6S)-5-formyl-5,6,7,8-tetrahydrofolate. Residues glycine 221–glutamate 366 enclose the TrmE-type G domain. GTP contacts are provided by residues asparagine 231–serine 236, serine 250–threonine 256, and aspartate 275–glycine 278. Mg(2+) contacts are provided by serine 235 and threonine 256. Lysine 442 contributes to the (6S)-5-formyl-5,6,7,8-tetrahydrofolate binding site.

Belongs to the TRAFAC class TrmE-Era-EngA-EngB-Septin-like GTPase superfamily. TrmE GTPase family. As to quaternary structure, homodimer. Heterotetramer of two MnmE and two MnmG subunits. K(+) serves as cofactor.

It localises to the cytoplasm. Functionally, exhibits a very high intrinsic GTPase hydrolysis rate. Involved in the addition of a carboxymethylaminomethyl (cmnm) group at the wobble position (U34) of certain tRNAs, forming tRNA-cmnm(5)s(2)U34. The polypeptide is tRNA modification GTPase MnmE (Brucella anthropi (strain ATCC 49188 / DSM 6882 / CCUG 24695 / JCM 21032 / LMG 3331 / NBRC 15819 / NCTC 12168 / Alc 37) (Ochrobactrum anthropi)).